A 196-amino-acid chain; its full sequence is CASP-like protein 2U1 (196 aa).

Over 1–11 (MAPMECVRRRN) the chain is Cytoplasmic. Residues 12–32 (VGELVLRCAATLVCMLSLMLL) traverse the membrane as a helical segment. Residues 33 to 58 (VRDQQIAVQEVGVTSVTTQLRYSSST) are Extracellular-facing. Residues 59–79 (GLVYLVYANGLVALYCFVVVL) form a helical membrane-spanning segment. Residues 80-95 (TSSFNGGSVMRRNKSG) lie on the Cytoplasmic side of the membrane. Residues 96–116 (AWALFVLDQVLACILLSAASA) form a helical membrane-spanning segment. Topologically, residues 117–148 (ASEIAFLVEKGAKKTIWDSKCIVYGHFCRMLE) are extracellular. The helical transmembrane segment at 149–169 (VSIATSFIAVIMLGSICVLSA) threads the bilayer. The Cytoplasmic portion of the chain corresponds to 170–196 (KQLFQQYTHYARIVNMVKLKSTPNSLL).

This sequence belongs to the Casparian strip membrane proteins (CASP) family. Homodimer and heterodimers.

It is found in the cell membrane. In Pteridium aquilinum subsp. aquilinum (Bracken fern), this protein is CASP-like protein 2U1.